The following is a 230-amino-acid chain: Cyclin-U2-2 (230 aa).

Belongs to the cyclin family. Cyclin U/P subfamily. Interacts with CDKA-1. As to expression, expressed in roots and stems. Expressed in the shoot apex, leaf primordia and young leaves.

This Arabidopsis thaliana (Mouse-ear cress) protein is Cyclin-U2-2 (CYCU2-2).